A 160-amino-acid polypeptide reads, in one-letter code: Phosphopantetheine adenylyltransferase (160 aa).

A substrate-binding site is contributed by Ser9. ATP is bound by residues 9–10 and His17; that span reads SF. Lys41, Thr73, and Arg87 together coordinate substrate. Residues 88–90, Glu98, and 123–129 contribute to the ATP site; these read GMR and YTFFSSS.

The protein belongs to the bacterial CoaD family. As to quaternary structure, homohexamer. Mg(2+) is required as a cofactor.

It is found in the cytoplasm. The catalysed reaction is (R)-4'-phosphopantetheine + ATP + H(+) = 3'-dephospho-CoA + diphosphate. It functions in the pathway cofactor biosynthesis; coenzyme A biosynthesis; CoA from (R)-pantothenate: step 4/5. Its function is as follows. Reversibly transfers an adenylyl group from ATP to 4'-phosphopantetheine, yielding dephospho-CoA (dPCoA) and pyrophosphate. In Roseiflexus castenholzii (strain DSM 13941 / HLO8), this protein is Phosphopantetheine adenylyltransferase.